The sequence spans 388 residues: Succinate--CoA ligase [ADP-forming] subunit beta (388 aa).

The ATP-grasp domain occupies 9 to 244 (KEIFRSMGVA…LEEEDPKEIE (236 aa)). ATP-binding positions include Lys46, 53 to 55 (GRG), Glu99, Cys102, and Glu107. Positions 199 and 213 each coordinate Mg(2+). Substrate contacts are provided by residues Asn264 and 321 to 323 (GIM).

This sequence belongs to the succinate/malate CoA ligase beta subunit family. In terms of assembly, heterotetramer of two alpha and two beta subunits. Mg(2+) is required as a cofactor.

The enzyme catalyses succinate + ATP + CoA = succinyl-CoA + ADP + phosphate. It catalyses the reaction GTP + succinate + CoA = succinyl-CoA + GDP + phosphate. The protein operates within carbohydrate metabolism; tricarboxylic acid cycle; succinate from succinyl-CoA (ligase route): step 1/1. In terms of biological role, succinyl-CoA synthetase functions in the citric acid cycle (TCA), coupling the hydrolysis of succinyl-CoA to the synthesis of either ATP or GTP and thus represents the only step of substrate-level phosphorylation in the TCA. The beta subunit provides nucleotide specificity of the enzyme and binds the substrate succinate, while the binding sites for coenzyme A and phosphate are found in the alpha subunit. The polypeptide is Succinate--CoA ligase [ADP-forming] subunit beta (Staphylococcus aureus (strain Mu3 / ATCC 700698)).